The following is a 70-amino-acid chain: Large ribosomal subunit protein bL31 (70 aa).

This sequence belongs to the bacterial ribosomal protein bL31 family. Type A subfamily. In terms of assembly, part of the 50S ribosomal subunit.

Functionally, binds the 23S rRNA. The sequence is that of Large ribosomal subunit protein bL31 from Mycoplasma mobile (strain ATCC 43663 / 163K / NCTC 11711) (Mesomycoplasma mobile).